Reading from the N-terminus, the 427-residue chain is MLDIKRLRQDFEGIKEKLAHRGEDLSALDRFPQLEEKRRDLINEVEVKKAKRNEATKQIAELKRNKEDAEGPILETRRLGDEIKLLDEELREVEAELNLILLSIPNIPHESTPIGETEDDNVTIREIGTKPEFDFEPKQHWDVMEDLQIVDVERAGKVTGSRFVFYKGLGARLERALINFMMDLHSDEHGYAEVLPPYMVNRDSMTGTGQLPKFEEDAFKVADTNYFLVPTAEVPVTNMHREEILPETQLPIAYTAYSANFRSEAGSAGRDTRGLIRQHQFNKVELVRFVKPEESYEQLELLTGHAEEVLKRLGLPYQVLSMCTADLGFTAAKKYDIEVWMPAQGVYREISSCSNFEDFQARRAGIRFRRDANAKPEFVHTLNGSGLAVGRTVAAILENYQQADGSVVIPEVLRPYMGGKEKIEMPN.

Residue 231-233 (TAE) coordinates L-serine. 262-264 (RSE) serves as a coordination point for ATP. Glutamate 285 provides a ligand contact to L-serine. 349 to 352 (EISS) provides a ligand contact to ATP. Serine 385 provides a ligand contact to L-serine.

This sequence belongs to the class-II aminoacyl-tRNA synthetase family. Type-1 seryl-tRNA synthetase subfamily. Homodimer. The tRNA molecule binds across the dimer.

Its subcellular location is the cytoplasm. It carries out the reaction tRNA(Ser) + L-serine + ATP = L-seryl-tRNA(Ser) + AMP + diphosphate + H(+). The enzyme catalyses tRNA(Sec) + L-serine + ATP = L-seryl-tRNA(Sec) + AMP + diphosphate + H(+). It participates in aminoacyl-tRNA biosynthesis; selenocysteinyl-tRNA(Sec) biosynthesis; L-seryl-tRNA(Sec) from L-serine and tRNA(Sec): step 1/1. Catalyzes the attachment of serine to tRNA(Ser). Is also able to aminoacylate tRNA(Sec) with serine, to form the misacylated tRNA L-seryl-tRNA(Sec), which will be further converted into selenocysteinyl-tRNA(Sec). The protein is Serine--tRNA ligase of Exiguobacterium sp. (strain ATCC BAA-1283 / AT1b).